Reading from the N-terminus, the 491-residue chain is Katanin p60 ATPase-containing subunit A1 (491 aa).

The interval 1-29 (MSLQMIVENVKLAREYALLGNYDSAMVYY) is interaction with KATNB1. The tract at residues 1-75 (MSLQMIVENV…VKDIMKTLES (75 aa)) is interaction with dynein and NDEL1. The segment at 1–185 (MSLQMIVENV…EPEANKFDGT (185 aa)) is interaction with microtubules; sufficient for microtubule severing activity. Phosphoserine; by DYRK2 is present on Ser42. The tract at residues 101–182 (PVPVERRPLP…AVTEPEANKF (82 aa)) is disordered. Basic and acidic residues predominate over residues 145–169 (HNDRGKAVRSREKKEQSKGREEKNK). 249–256 (GPPGTGKT) contacts ATP.

The protein belongs to the AAA ATPase family. Katanin p60 subunit A1 subfamily. In terms of assembly, can homooligomerize into hexameric rings, which may be promoted by interaction with microtubules. Interacts with KATNB1, which may serve as a targeting subunit. Interacts with ASPM; the katanin complex formation KATNA1:KATNB1 is required for the association of ASPM. Interacts with dynein and NDEL1. Associates with the E3 ligase complex containing DYRK2, EDD/UBR5, DDB1 and DCAF1 proteins (EDVP complex). Interacts with KLHL42 (via the kelch domains). Interacts with CUL3; the interaction is enhanced by KLHL42. Interacts with KATNB1 and KATNBL1. Interacts with CAMSAP2 and CAMSAP3; leading to regulate the length of CAMSAP-decorated microtubule stretches. In terms of processing, phosphorylation by DYRK2 triggers ubiquitination and subsequent degradation. Post-translationally, ubiquitinated by the BCR(KLHL42) E3 ubiquitin ligase complex, leading to its proteasomal degradation. Ubiquitinated by the EDVP E3 ligase complex and subsequently targeted for proteasomal degradation.

It is found in the cytoplasm. The protein resides in the midbody. The protein localises to the cytoskeleton. Its subcellular location is the microtubule organizing center. It localises to the centrosome. It is found in the spindle pole. The protein resides in the spindle. It carries out the reaction n ATP + n H2O + a microtubule = n ADP + n phosphate + (n+1) alpha/beta tubulin heterodimers.. ATPase activity is stimulated by microtubules, which promote homooligomerization. ATP-dependent microtubule severing is stimulated by interaction with KATNB1. Catalytic subunit of a complex which severs microtubules in an ATP-dependent manner. Microtubule severing may promote rapid reorganization of cellular microtubule arrays and the release of microtubules from the centrosome following nucleation. Microtubule release from the mitotic spindle poles may allow depolymerization of the microtubule end proximal to the spindle pole, leading to poleward microtubule flux and poleward motion of chromosome. The function in regulating microtubule dynamics at spindle poles seems to depend on the association of the katanin KATNA1:KATNB1 complex with ASPM which recruits it to microtubules. Reversely KATNA1:KATNB1 can enhance ASPM blocking activity on microtubule minus-end growth. Microtubule release within the cell body of neurons may be required for their transport into neuronal processes by microtubule-dependent motor proteins. This transport is required for axonal growth. This Mus musculus (Mouse) protein is Katanin p60 ATPase-containing subunit A1 (Katna1).